Reading from the N-terminus, the 528-residue chain is Tyrosine 3-monooxygenase (528 aa).

At S19 the chain carries Phosphoserine; by CaMK2. The tract at residues G33–F65 is disordered. Residues P47–T59 show a composition bias toward low complexity. Position 62 is a phosphoserine (S62). S71 bears the Phosphoserine; by CaMK2 and PKA mark. Positions 361, 366, and 406 each coordinate Fe cation. Position 502 is a phosphoserine (S502).

Belongs to the biopterin-dependent aromatic amino acid hydroxylase family. Homotetramer. Interacts (when phosphorylated at Ser-19) with YWHAG; one YWHAG dimer binds to one TH tetramer and this interaction may influence the phosphorylation and dephosphorylation of other sites. Interacts with NT5DC2; the interaction results in reduced phosphorylation and decreased catalytic activity of TH. The cofactor is Fe(2+). Phosphorylated on Ser-19, Ser-62 and Ser-71 by several protein kinases with different site specificities. Phosphorylation at Ser-62 and Ser-71 leads to an increase of TH activity. Phosphorylation at Ser-71 activates the enzyme and also counteracts the feedback inhibition of TH by catecholamines. Phosphorylation of Ser-19 and Ser-62 triggers the proteasomal degradation of TH through the ubiquitin-proteasome pathway. Phosphorylation at Ser-62 facilitates transport of TH from the soma to the nerve terminals via the microtubule network. Phosphorylation at Ser-19 induces the high-affinity binding to the 14-3-3 protein YWHAG; this interaction may influence the phosphorylation and dephosphorylation of other sites. Ser-19 increases the phosphorylation at Ser-71 in a hierarchical manner, leading to increased activity. As to expression, mainly expressed in the brain and adrenal glands.

It is found in the cytoplasm. It localises to the perinuclear region. Its subcellular location is the nucleus. The protein localises to the cell projection. The protein resides in the axon. It is found in the cytoplasmic vesicle. It localises to the secretory vesicle. Its subcellular location is the synaptic vesicle. It catalyses the reaction (6R)-L-erythro-5,6,7,8-tetrahydrobiopterin + L-tyrosine + O2 = (4aS,6R)-4a-hydroxy-L-erythro-5,6,7,8-tetrahydrobiopterin + L-dopa. The protein operates within catecholamine biosynthesis; dopamine biosynthesis; dopamine from L-tyrosine: step 1/2. With respect to regulation, inhibited in feedback fashion by the catecholamine neurotransmitters, especially by dopamine in competition with tetrahydrobiopterin. Phosphorylation of several Ser/Thr residues in the N-terminus regulates the catalytic activity. Ser-62 and Ser-71 are readily phosphorylated to activate the catalytic activity. A Cysteine modification induced by N-ethylmaleimide (NEM), inhibits tyrosine 3-monooxygenase activity through the modification of the Cys-207. Functionally, catalyzes the conversion of L-tyrosine to L-dihydroxyphenylalanine (L-Dopa), the rate-limiting step in the biosynthesis of catecholamines, dopamine, noradrenaline, and adrenaline. Uses tetrahydrobiopterin and molecular oxygen to convert tyrosine to L-Dopa. In addition to tyrosine, is able to catalyze the hydroxylation of phenylalanine and tryptophan with lower specificity. Positively regulates the regression of retinal hyaloid vessels during postnatal development. Lacks catalytic activity. This Homo sapiens (Human) protein is Tyrosine 3-monooxygenase.